Reading from the N-terminus, the 49-residue chain is Large ribosomal subunit protein bL33B (49 aa).

It belongs to the bacterial ribosomal protein bL33 family.

The polypeptide is Large ribosomal subunit protein bL33B (Levilactobacillus brevis (strain ATCC 367 / BCRC 12310 / CIP 105137 / JCM 1170 / LMG 11437 / NCIMB 947 / NCTC 947) (Lactobacillus brevis)).